A 345-amino-acid polypeptide reads, in one-letter code: Glycerol-3-phosphate dehydrogenase [NAD(P)+] (345 aa).

NADPH is bound by residues Ser11, Trp12, Arg32, Arg33, and Lys105. 3 residues coordinate sn-glycerol 3-phosphate: Lys105, Gly136, and Ser138. Residue Ala140 participates in NADPH binding. Sn-glycerol 3-phosphate is bound by residues Lys191, Asp244, Ser254, Arg255, and Asn256. Lys191 functions as the Proton acceptor in the catalytic mechanism. Arg255 serves as a coordination point for NADPH. NADPH is bound by residues Val279 and Glu281.

Belongs to the NAD-dependent glycerol-3-phosphate dehydrogenase family.

It is found in the cytoplasm. It carries out the reaction sn-glycerol 3-phosphate + NAD(+) = dihydroxyacetone phosphate + NADH + H(+). The catalysed reaction is sn-glycerol 3-phosphate + NADP(+) = dihydroxyacetone phosphate + NADPH + H(+). The protein operates within membrane lipid metabolism; glycerophospholipid metabolism. In terms of biological role, catalyzes the reduction of the glycolytic intermediate dihydroxyacetone phosphate (DHAP) to sn-glycerol 3-phosphate (G3P), the key precursor for phospholipid synthesis. In Halalkalibacterium halodurans (strain ATCC BAA-125 / DSM 18197 / FERM 7344 / JCM 9153 / C-125) (Bacillus halodurans), this protein is Glycerol-3-phosphate dehydrogenase [NAD(P)+].